Reading from the N-terminus, the 656-residue chain is UV-damage endonuclease (656 aa).

Disordered stretches follow at residues 1–82 (MPSR…GKEQ), 119–146 (PSVV…KEPV), 175–194 (IIEP…RPPA), 241–264 (PLQF…EPQD), 492–515 (EPCD…TLPP), 550–620 (DMVP…GPYN), and 636–656 (KREV…EFDG). Over residues 13–32 (TPQSESSTFSSTLDSSAPSP) the composition is skewed to low complexity. Composition is skewed to basic and acidic residues over residues 48 to 82 (SEKD…GKEQ) and 135 to 146 (TNAEEREAKEPV). Positions 550–561 (DMVPYDRDDENR) are enriched in basic and acidic residues. The segment covering 568 to 579 (APKKKKGGKRKR) has biased composition (basic residues). A compositionally biased stretch (acidic residues) spans 583-595 (EEAAEPEEVDTAA). Positions 596–614 (DDVKDAPEGPKEVPEEERA) are enriched in basic and acidic residues. Residues 647–656 (EVEDEGEFDG) are compositionally biased toward acidic residues.

Belongs to the uve1/UvsE family. It depends on Mg(2+) as a cofactor.

In terms of biological role, endonuclease for the repair of UV-irradiated DNA. Involved in the excision of cyclobutane pyrimidine dimers (CPD) and 6-4 pyrimidine pyrimidones (6-4PP) which forms the UV damage repair (UVDR) pathway. The sequence is that of UV-damage endonuclease (mus-18) from Neurospora crassa (strain ATCC 24698 / 74-OR23-1A / CBS 708.71 / DSM 1257 / FGSC 987).